The primary structure comprises 445 residues: Cytochrome P450 monooxygenase penB (445 aa).

C381 contributes to the heme binding site.

It belongs to the cytochrome P450 family. Heme serves as cofactor.

It functions in the pathway secondary metabolite biosynthesis. Its pathway is alkaloid biosynthesis. It participates in mycotoxin biosynthesis. Functionally, cytochrome P450 monooxygenase; part of the gene cluster that mediates the biosynthesis of penigequinolones, potent insecticidal alkaloids that contain a highly modified 10-carbon prenyl group. The first stage is catalyzed by the nonribosomal peptide synthetase penN that condenses anthranilic acid and O-methyl-L-tyrosine to produce 4'-methoxycyclopeptin. 4'-methoxycyclopeptin is then converted to 4'-methoxydehydrocyclopeptin by the ketoglutarate-dependent dioxygenase penM through dehydrogenation to form a double bond between C-alpha and C-beta of the O-methyltyrosine side chain. PenM also converts its first product methoxydehydrocyclopeptin to 4'-methoxycyclopenin. The following conversion of 4'methoxycyclopenin into 4'-methoxyviridicatin is catalyzed by the cyclopenase penL. 4'-methoxyviridicatin is the precursor of quinolone natural products, and is further converted to quinolinone B. The prenyltransferase penI then catalyzes the canonical Friedel-Crafts alkylation of quinolinone B with dimethylallyl cation to yield dimethylallyl quinolone, which is subjected to FAD-dependent dehydrogenation by the FAD-linked oxidoreductase penH to yield conjugated aryl diene. The delta(3') double bond then serves as the site of the second alkylation with DMAPP catalyzed by the prenyltransferase penG to yield a carbenium ion intermediate, which can be attacked by H(2)O to yield a styrenyl quinolone containing a C3'-hydroxyprenyl chain, or undergo cyclization to yield yaequinolones J1 and J2. The conversion of the styrenyl quinolone into the tetrahydrofuran-containing yaequinolone C is performed by the FAD-dependent monooxygenase penE and involves epoxidation of the terminal C7'-C8' olefin, followed by epoxide ring opening initiated by the C3' hydroxyl group. The predicted cysteine hydrolase penJ acts as an epoxide hydrolase that enhances the rate of the 5-exo-tet cyclization step, increasing the yield of yaequinolone C. PenF catalyzes the cationic rearrangement of the epoxide formed by penE (before ring opening to produce yaequinolone C) into yaequinolone D. Finally, the short-chain dehydrogenase/reductase (SDR)-like reductase penD, catalyzes both the dehydration of yaequinolone D and the reduction of the resulting oxonium to yield penigequinolone. This is Cytochrome P450 monooxygenase penB from Penicillium thymicola.